We begin with the raw amino-acid sequence, 468 residues long: Beta-amylase (468 aa).

Positions 1-36 (MTLYRSLWKKGCMLLLSLVLSLTAFIGSPSNTASAA) are cleaved as a signal peptide. Asp76 serves as a coordination point for substrate. Residues Glu83 and Asp87 each contribute to the Ca(2+) site. Substrate is bound by residues His116 and Asp124. Cys118 and Cys126 form a disulfide bridge. Ca(2+) is bound at residue Glu170. Glu198 acts as the Proton donor in catalysis. Substrate is bound by residues Lys314, His319, and Thr357. Catalysis depends on Glu394, which acts as the Proton acceptor. Substrate is bound by residues 395–396 (NA) and Arg423.

This sequence belongs to the glycosyl hydrolase 14 family. Ca(2+) serves as cofactor.

It carries out the reaction Hydrolysis of (1-&gt;4)-alpha-D-glucosidic linkages in polysaccharides so as to remove successive maltose units from the non-reducing ends of the chains.. In Cytobacillus firmus (Bacillus firmus), this protein is Beta-amylase.